We begin with the raw amino-acid sequence, 387 residues long: 1-deoxy-D-xylulose 5-phosphate reductoisomerase (387 aa).

Positions 10, 11, 12, 13, 36, 37, and 124 each coordinate NADPH. Lysine 125 contributes to the 1-deoxy-D-xylulose 5-phosphate binding site. Residue glutamate 126 participates in NADPH binding. Position 150 (aspartate 150) interacts with Mn(2+). Residues serine 151, glutamate 152, serine 176, and histidine 199 each contribute to the 1-deoxy-D-xylulose 5-phosphate site. A Mn(2+)-binding site is contributed by glutamate 152. Glycine 205 lines the NADPH pocket. 4 residues coordinate 1-deoxy-D-xylulose 5-phosphate: serine 212, asparagine 217, lysine 218, and glutamate 221. Glutamate 221 contributes to the Mn(2+) binding site.

It belongs to the DXR family. Requires Mg(2+) as cofactor. The cofactor is Mn(2+).

The catalysed reaction is 2-C-methyl-D-erythritol 4-phosphate + NADP(+) = 1-deoxy-D-xylulose 5-phosphate + NADPH + H(+). It functions in the pathway isoprenoid biosynthesis; isopentenyl diphosphate biosynthesis via DXP pathway; isopentenyl diphosphate from 1-deoxy-D-xylulose 5-phosphate: step 1/6. In terms of biological role, catalyzes the NADPH-dependent rearrangement and reduction of 1-deoxy-D-xylulose-5-phosphate (DXP) to 2-C-methyl-D-erythritol 4-phosphate (MEP). In Cyanothece sp. (strain PCC 7425 / ATCC 29141), this protein is 1-deoxy-D-xylulose 5-phosphate reductoisomerase.